The following is a 70-amino-acid chain: DNA-directed RNA polymerase subunit epsilon (70 aa).

The protein belongs to the RNA polymerase subunit epsilon family. As to quaternary structure, RNAP is composed of a core of 2 alpha, a beta and a beta' subunit. The core is associated with a delta subunit, and at least one of epsilon or omega. When a sigma factor is associated with the core the holoenzyme is formed, which can initiate transcription.

The catalysed reaction is RNA(n) + a ribonucleoside 5'-triphosphate = RNA(n+1) + diphosphate. In terms of biological role, a non-essential component of RNA polymerase (RNAP). This chain is DNA-directed RNA polymerase subunit epsilon, found in Bacillus cytotoxicus (strain DSM 22905 / CIP 110041 / 391-98 / NVH 391-98).